The primary structure comprises 497 residues: Probable D-lactate dehydrogenase, mitochondrial (497 aa).

The FAD-binding PCMH-type domain occupies 65 to 246; the sequence is HRCRPPDVVV…TKATLRLYGV (182 aa).

It belongs to the FAD-binding oxidoreductase/transferase type 4 family. Requires FAD as cofactor.

It is found in the mitochondrion. The enzyme catalyses (R)-lactate + 2 Fe(III)-[cytochrome c] = 2 Fe(II)-[cytochrome c] + pyruvate + 2 H(+). In terms of biological role, involved in D-lactate, but not L-lactate catabolic process. This Danio rerio (Zebrafish) protein is Probable D-lactate dehydrogenase, mitochondrial (ldhd).